The chain runs to 181 residues: Large ribosomal subunit protein uL6 (181 aa).

It belongs to the universal ribosomal protein uL6 family. In terms of assembly, part of the 50S ribosomal subunit.

Functionally, this protein binds to the 23S rRNA, and is important in its secondary structure. It is located near the subunit interface in the base of the L7/L12 stalk, and near the tRNA binding site of the peptidyltransferase center. The sequence is that of Large ribosomal subunit protein uL6 from Synechococcus sp. (strain JA-2-3B'a(2-13)) (Cyanobacteria bacterium Yellowstone B-Prime).